The primary structure comprises 451 residues: Eukaryotic translation initiation factor 5 (451 aa).

29-36 provides a ligand contact to GTP; the sequence is GRGNGIKT. 2 disordered regions span residues 143-233 and 263-299; these read LKNP…DDDV and STEE…TKPS. Residues 147–178 are compositionally biased toward basic and acidic residues; the sequence is PEQKKGGKDKKAMRRAEKERLKEGEAADEEQK. Residues 179 to 188 are compositionally biased toward basic residues; that stretch reads KLKKDAKKKG. Basic and acidic residues-rich tracts occupy residues 208–226 and 266–279; these read DEDH…KAAA and ETEK…HKDG. Positions 290-449 constitute a W2 domain; the sequence is NDKPAVTKPS…QSAESDEEGD (160 aa).

The protein belongs to the eIF-2-beta/eIF-5 family.

In terms of biological role, catalyzes the hydrolysis of GTP bound to the 40S ribosomal initiation complex (40S.mRNA.Met-tRNA[F].eIF-2.GTP) with the subsequent joining of a 60S ribosomal subunit resulting in the release of eIF-2 and the guanine nucleotide. The subsequent joining of a 60S ribosomal subunit results in the formation of a functional 80S initiation complex (80S.mRNA.Met-tRNA[F]). In Zea mays (Maize), this protein is Eukaryotic translation initiation factor 5 (EIF5).